A 122-amino-acid polypeptide reads, in one-letter code: Large ribosomal subunit protein uL14 (122 aa).

This sequence belongs to the universal ribosomal protein uL14 family. As to quaternary structure, part of the 50S ribosomal subunit. Forms a cluster with proteins L3 and L19. In the 70S ribosome, L14 and L19 interact and together make contacts with the 16S rRNA in bridges B5 and B8.

In terms of biological role, binds to 23S rRNA. Forms part of two intersubunit bridges in the 70S ribosome. In Shewanella loihica (strain ATCC BAA-1088 / PV-4), this protein is Large ribosomal subunit protein uL14.